A 936-amino-acid chain; its full sequence is Phosphoenolpyruvate carboxylase (936 aa).

The tract at residues 1–20 (MSSLNLSAGPEPVSERPDDA) is disordered. Active-site residues include H164 and K598.

It belongs to the PEPCase type 1 family. It depends on Mg(2+) as a cofactor.

The catalysed reaction is oxaloacetate + phosphate = phosphoenolpyruvate + hydrogencarbonate. Functionally, forms oxaloacetate, a four-carbon dicarboxylic acid source for the tricarboxylic acid cycle. The protein is Phosphoenolpyruvate carboxylase (ppc) of Rhodopseudomonas palustris (strain ATCC BAA-98 / CGA009).